We begin with the raw amino-acid sequence, 359 residues long: Elongation factor Ts 1, mitochondrial (359 aa).

The segment covering 323-341 (GKAAPAPKAEEPAAVAPAK) has biased composition (low complexity). The tract at residues 323–345 (GKAAPAPKAEEPAAVAPAKADAE) is disordered.

It belongs to the EF-Ts family.

It is found in the mitochondrion. Its function is as follows. Associates with the EF-Tu.GDP complex and induces the exchange of GDP to GTP. It remains bound to the aminoacyl-tRNA.EF-Tu.GTP complex up to the GTP hydrolysis stage on the ribosome. The sequence is that of Elongation factor Ts 1, mitochondrial from Thalassiosira pseudonana (Marine diatom).